Reading from the N-terminus, the 88-residue chain is Small ribosomal subunit protein bS20 (88 aa).

Positions Met1–Met27 are disordered.

Belongs to the bacterial ribosomal protein bS20 family.

Binds directly to 16S ribosomal RNA. The chain is Small ribosomal subunit protein bS20 from Shewanella putrefaciens (strain CN-32 / ATCC BAA-453).